The chain runs to 670 residues: mRNA cleavage and polyadenylation specificity factor complex subunit pta1 (670 aa).

This sequence to yeast PTA1. As to quaternary structure, component of the cleavage and polyadenylation factor (CPF) complex, which is composed of cft1, cft2, ysh1, pta1, swd2, pfs2, dis2, yth1, ssu72, and fip1.

Its subcellular location is the nucleus. Component of the cleavage and polyadenylation factor (CPF) complex, which plays a key role in polyadenylation-dependent pre-mRNA 3'-end formation and cooperates with cleavage factors including the CFIA complex and NAB4/CFIB. The sequence is that of mRNA cleavage and polyadenylation specificity factor complex subunit pta1 (pta1) from Schizosaccharomyces pombe (strain 972 / ATCC 24843) (Fission yeast).